We begin with the raw amino-acid sequence, 565 residues long: Thiol:disulfide interchange protein DsbD (565 aa).

The signal sequence occupies residues 1-19 (MAQRIFTLILLLCSTSVFA). Disulfide bonds link C122/C128 and C182/C304. 7 helical membrane passes run 163–183 (LPFS…TPCV), 208–228 (LLTF…GLVV), 243–263 (YVLI…FGLF), 289–309 (GVFI…TAPL), 323–343 (WLGG…LMLI), 357–377 (WMEQ…VFLL), and 384–404 (IWGL…AFIT). The Thioredoxin domain maps to 434 to 565 (WAFGETHTAQ…FSAHLRDRQP (132 aa)). Cysteines 480 and 483 form a disulfide.

It belongs to the thioredoxin family. DsbD subfamily.

The protein localises to the cell inner membrane. The enzyme catalyses [protein]-dithiol + NAD(+) = [protein]-disulfide + NADH + H(+). It catalyses the reaction [protein]-dithiol + NADP(+) = [protein]-disulfide + NADPH + H(+). Functionally, required to facilitate the formation of correct disulfide bonds in some periplasmic proteins and for the assembly of the periplasmic c-type cytochromes. Acts by transferring electrons from cytoplasmic thioredoxin to the periplasm. This transfer involves a cascade of disulfide bond formation and reduction steps. This Escherichia coli O6:K15:H31 (strain 536 / UPEC) protein is Thiol:disulfide interchange protein DsbD.